The primary structure comprises 106 residues: Large ribosomal subunit protein uL24 (106 aa).

This sequence belongs to the universal ribosomal protein uL24 family. In terms of assembly, part of the 50S ribosomal subunit.

Functionally, one of two assembly initiator proteins, it binds directly to the 5'-end of the 23S rRNA, where it nucleates assembly of the 50S subunit. One of the proteins that surrounds the polypeptide exit tunnel on the outside of the subunit. This is Large ribosomal subunit protein uL24 from Delftia acidovorans (strain DSM 14801 / SPH-1).